Consider the following 508-residue polypeptide: Phenylalanine--tRNA ligase alpha subunit (508 aa).

A2 carries the post-translational modification N-acetylalanine. Phosphoserine occurs at positions 193 and 301. K311 is modified (N6-acetyllysine). L-phenylalanine is bound by residues T329, 372–374, and Y412; that span reads QIE. E414 provides a ligand contact to Mg(2+). F438 is an L-phenylalanine binding site.

Belongs to the class-II aminoacyl-tRNA synthetase family. Phe-tRNA synthetase alpha subunit type 2 subfamily. As to quaternary structure, heterotetramer; dimer of two heterodimers formed by FARSA and FARSB. It depends on Mg(2+) as a cofactor.

The protein localises to the cytoplasm. It carries out the reaction tRNA(Phe) + L-phenylalanine + ATP = L-phenylalanyl-tRNA(Phe) + AMP + diphosphate + H(+). This is Phenylalanine--tRNA ligase alpha subunit (Farsa) from Rattus norvegicus (Rat).